We begin with the raw amino-acid sequence, 385 residues long: Deoxyhypusine synthase (385 aa).

Residues 108 to 112, 134 to 136, E140, and D257 contribute to the NAD(+) site; these read SNLIS and TAG. 139-140 is a binding site for spermidine; it reads EE. D262 is a spermidine binding site. G304 contributes to the NAD(+) binding site. H309 contributes to the spermidine binding site. NAD(+) is bound at residue 329–330; sequence TG. Residues 335-337 and 344-350 contribute to the spermidine site; these read GSD and EAVSWGK. Catalysis depends on K350, which acts as the Nucleophile. An NAD(+)-binding site is contributed by 363-364; that stretch reads DV.

The protein belongs to the deoxyhypusine synthase family. The cofactor is NAD(+).

It carries out the reaction [eIF5A protein]-L-lysine + spermidine = [eIF5A protein]-deoxyhypusine + propane-1,3-diamine. Its pathway is protein modification; eIF5A hypusination. Functionally, catalyzes the NAD-dependent oxidative cleavage of spermidine and the subsequent transfer of the butylamine moiety of spermidine to the epsilon-amino group of a specific lysine residue of the eIF-5A precursor protein to form the intermediate deoxyhypusine residue. This Candida glabrata (strain ATCC 2001 / BCRC 20586 / JCM 3761 / NBRC 0622 / NRRL Y-65 / CBS 138) (Yeast) protein is Deoxyhypusine synthase (DYS1).